A 398-amino-acid chain; its full sequence is Elongation factor Tu (398 aa).

In terms of domain architecture, tr-type G spans Lys10–Glu207. The tract at residues Gly19–Thr26 is G1. Position 19 to 26 (Gly19 to Thr26) interacts with GTP. Mg(2+) is bound at residue Thr26. A G2 region spans residues Gly63–Asn67. The segment at Asp84 to Gly87 is G3. Residues Asp84–His88 and Asn139–Asp142 contribute to the GTP site. Residues Asn139–Asp142 form a G4 region. The segment at Ser177–Leu179 is G5.

Belongs to the TRAFAC class translation factor GTPase superfamily. Classic translation factor GTPase family. EF-Tu/EF-1A subfamily. Monomer.

The protein resides in the cytoplasm. The catalysed reaction is GTP + H2O = GDP + phosphate + H(+). Its function is as follows. GTP hydrolase that promotes the GTP-dependent binding of aminoacyl-tRNA to the A-site of ribosomes during protein biosynthesis. The sequence is that of Elongation factor Tu from Streptococcus equi subsp. zooepidemicus (strain MGCS10565).